The following is a 254-amino-acid chain: Mamu class II histocompatibility antigen, DR alpha chain (254 aa).

The N-terminal stretch at 1 to 25 is a signal peptide; the sequence is MAESGVPVLGFFIIAVLMSAQESWA. An alpha-1 region spans residues 26 to 109; sequence IKEEHVIIQA…KRSNNTPITN (84 aa). At 26–216 the chain is on the extracellular side; it reads IKEEHVIIQA…APSPLPETTE (191 aa). An N-linked (GlcNAc...) asparagine glycan is attached at Asn103. An alpha-2 region spans residues 110–203; it reads VPPEVTVLTN…CLDAPLLKHW (94 aa). An Ig-like C1-type domain is found at 112-204; it reads PEVTVLTNSP…LDAPLLKHWE (93 aa). Cys132 and Cys188 are oxidised to a cystine. Residues 204-216 are connecting peptide; that stretch reads EFDAPSPLPETTE. Residues 217–239 traverse the membrane as a helical segment; it reads NVVCALGLIVGLVGIIVGTVFII. Residues 240–254 are Cytoplasmic-facing; it reads KGVRKSNAAERRGPL. Lys244 is covalently cross-linked (Glycyl lysine isopeptide (Lys-Gly) (interchain with G-Cter in ubiquitin)).

This sequence belongs to the MHC class II family. Heterodimer of an alpha chain and a beta chain.

Its subcellular location is the membrane. The chain is Mamu class II histocompatibility antigen, DR alpha chain (Mamu-DRA) from Macaca mulatta (Rhesus macaque).